A 664-amino-acid chain; its full sequence is DNA ligase (664 aa).

Residues 32-36 (DAEYD), 81-82 (SL), and Glu113 each bind NAD(+). Residue Lys115 is the N6-AMP-lysine intermediate of the active site. The NAD(+) site is built by Arg136, Glu173, Lys289, and Lys313. The Zn(2+) site is built by Cys407, Cys410, Cys425, and Cys431. One can recognise a BRCT domain in the interval 586 to 664 (ASEQPFAGKT…EEQLQAALQS (79 aa)).

This sequence belongs to the NAD-dependent DNA ligase family. LigA subfamily. Mg(2+) serves as cofactor. The cofactor is Mn(2+).

It carries out the reaction NAD(+) + (deoxyribonucleotide)n-3'-hydroxyl + 5'-phospho-(deoxyribonucleotide)m = (deoxyribonucleotide)n+m + AMP + beta-nicotinamide D-nucleotide.. Functionally, DNA ligase that catalyzes the formation of phosphodiester linkages between 5'-phosphoryl and 3'-hydroxyl groups in double-stranded DNA using NAD as a coenzyme and as the energy source for the reaction. It is essential for DNA replication and repair of damaged DNA. In Aeromonas salmonicida (strain A449), this protein is DNA ligase.